The following is a 383-amino-acid chain: 1-deoxy-D-xylulose 5-phosphate reductoisomerase (383 aa).

Positions 10, 11, 12, 13, 36, 37, 38, and 122 each coordinate NADPH. K123 is a binding site for 1-deoxy-D-xylulose 5-phosphate. E124 contributes to the NADPH binding site. D148 serves as a coordination point for Mn(2+). 1-deoxy-D-xylulose 5-phosphate-binding residues include S149, E150, S174, and H197. Residue E150 participates in Mn(2+) binding. G203 is an NADPH binding site. Residues S210, N215, K216, and E219 each contribute to the 1-deoxy-D-xylulose 5-phosphate site. E219 is a Mn(2+) binding site.

Belongs to the DXR family. Mg(2+) is required as a cofactor. Mn(2+) serves as cofactor.

The catalysed reaction is 2-C-methyl-D-erythritol 4-phosphate + NADP(+) = 1-deoxy-D-xylulose 5-phosphate + NADPH + H(+). It participates in isoprenoid biosynthesis; isopentenyl diphosphate biosynthesis via DXP pathway; isopentenyl diphosphate from 1-deoxy-D-xylulose 5-phosphate: step 1/6. Functionally, catalyzes the NADPH-dependent rearrangement and reduction of 1-deoxy-D-xylulose-5-phosphate (DXP) to 2-C-methyl-D-erythritol 4-phosphate (MEP). In Bacillus pumilus (strain SAFR-032), this protein is 1-deoxy-D-xylulose 5-phosphate reductoisomerase.